Reading from the N-terminus, the 44-residue chain is Photosystem II reaction center protein K (44 aa).

Residues 1–7 (MESLLLA) constitute a propeptide that is removed on maturation. A helical membrane pass occupies residues 23-43 (LPIIPVFFLLLAFVWQAAIGF).

Belongs to the PsbK family. In terms of assembly, PSII is composed of 1 copy each of membrane proteins PsbA, PsbB, PsbC, PsbD, PsbE, PsbF, PsbH, PsbI, PsbJ, PsbK, PsbL, PsbM, PsbT, PsbX, PsbY, PsbZ, Psb30/Ycf12, at least 3 peripheral proteins of the oxygen-evolving complex and a large number of cofactors. It forms dimeric complexes.

The protein resides in the plastid. The protein localises to the chloroplast thylakoid membrane. Functionally, one of the components of the core complex of photosystem II (PSII). PSII is a light-driven water:plastoquinone oxidoreductase that uses light energy to abstract electrons from H(2)O, generating O(2) and a proton gradient subsequently used for ATP formation. It consists of a core antenna complex that captures photons, and an electron transfer chain that converts photonic excitation into a charge separation. The sequence is that of Photosystem II reaction center protein K from Trieres chinensis (Marine centric diatom).